The chain runs to 334 residues: Terpene synthase 1 (334 aa).

The Mg(2+) site is built by Asp-82 and Asp-86. A D(D/E)XX(D/E) motif motif is present at residues 82–86 (DDIFD). Arg-184 lines the substrate pocket. Mg(2+)-binding residues include Asn-230, Ser-234, and Glu-238. Positions 230 to 238 (NDIYSYHRE) match the NSE motif motif. A WxxxxxRY motif motif is present at residues 309–316 (WSESCTRY).

The protein belongs to the terpene synthase family. Requires Mg(2+) as cofactor.

It carries out the reaction (2E,6E)-farnesyl diphosphate = gamma-muurolene + diphosphate. The enzyme catalyses (2E,6E)-farnesyl diphosphate = alpha-muurolene + diphosphate. It catalyses the reaction (2E,6E)-farnesyl diphosphate = (-)-(E)-beta-caryophyllene + diphosphate. The catalysed reaction is (2E)-geranyl diphosphate = beta-myrcene + diphosphate. Its function is as follows. Terpene synthase that catalyzes the cyclization of farnesyl diphosphate (FPP) into a mixture of sesquiterpenes with gamma-muurolene as the most abundant compound and (-)-beta-caryophyllene, alpha-muurolene, and 4 unidentified sesquiterpenes as minor compoundss. TPS1 also shows monoterpene synthase activity and can also use geranyl diphosphate (GPP) as a substrate to convert it into a mixture of cyclic and acyclic monoterpenes, including myrcene and linalool. P.polycephalum has a unique biology and these volatile terpenoids could function in internal communication of P.polycephalum, to mark the territory that have been explored, or they may be involved in chemotaxis. The polypeptide is Terpene synthase 1 (Physarum polycephalum (Slime mold)).